We begin with the raw amino-acid sequence, 109 residues long: Nucleoid-associated protein BCB4264_A0025 (109 aa).

The protein belongs to the YbaB/EbfC family. In terms of assembly, homodimer.

Its subcellular location is the cytoplasm. The protein resides in the nucleoid. Functionally, binds to DNA and alters its conformation. May be involved in regulation of gene expression, nucleoid organization and DNA protection. The chain is Nucleoid-associated protein BCB4264_A0025 from Bacillus cereus (strain B4264).